Consider the following 132-residue polypeptide: Phosphomevalonate dehydratase small subunit (132 aa).

S61 serves as the catalytic Proton acceptor.

Belongs to the AcnX type II small subunit family. In terms of assembly, heterodimer composed of a large subunit (PMDh-L) and a small subunit (PMDh-S).

It catalyses the reaction (R)-5-phosphomevalonate = (2E)-3-methyl-5-phosphooxypent-2-enoate + H2O. Its pathway is isoprenoid biosynthesis; isopentenyl diphosphate biosynthesis via mevalonate pathway. Component of a hydro-lyase that catalyzes the dehydration of mevalonate 5-phosphate (MVA5P) to form trans-anhydromevalonate 5-phosphate (tAHMP). Involved in the archaeal mevalonate (MVA) pathway, which provides fundamental precursors for isoprenoid biosynthesis, such as isopentenyl diphosphate (IPP) and dimethylallyl diphosphate (DMAPP). The chain is Phosphomevalonate dehydratase small subunit from Archaeoglobus fulgidus (strain ATCC 49558 / DSM 4304 / JCM 9628 / NBRC 100126 / VC-16).